We begin with the raw amino-acid sequence, 169 residues long: Aspartic protease inhibitor 6 (169 aa).

The N-linked (GlcNAc...) asparagine glycan is linked to N1. 2 disulfide bridges follow: C30–C75 and C124–C134.

The protein belongs to the protease inhibitor I3 (leguminous Kunitz-type inhibitor) family.

It localises to the vacuole. Functionally, inhibitor of cathepsin D (aspartic protease). May also inhibit trypsin and chymotrypsin (serine proteases). Protects the plant by inhibiting proteases of invading organisms. The sequence is that of Aspartic protease inhibitor 6 from Solanum tuberosum (Potato).